The following is a 174-amino-acid chain: Co-chaperone protein HscB (174 aa).

The J domain occupies 2 to 74; that stretch reads NYFALFDLPR…LNRAIYFLCL (73 aa).

It belongs to the HscB family. In terms of assembly, interacts with HscA and stimulates its ATPase activity. Interacts with IscU.

Its function is as follows. Co-chaperone involved in the maturation of iron-sulfur cluster-containing proteins. Seems to help targeting proteins to be folded toward HscA. This is Co-chaperone protein HscB from Buchnera aphidicola subsp. Acyrthosiphon pisum (strain 5A).